Here is a 314-residue protein sequence, read N- to C-terminus: Inosine-uridine preferring nucleoside hydrolase (314 aa).

Asp-10 is a Ca(2+) binding site. Substrate is bound at residue Asp-14. 2 residues coordinate Ca(2+): Asp-15 and Thr-126. Substrate contacts are provided by Asn-160, Glu-166, and Asn-168. Residue His-240 is the Proton donor of the active site. Asp-241 is a binding site for Ca(2+).

The protein belongs to the IUNH family. Homotetramer. It depends on Ca(2+) as a cofactor.

It catalyses the reaction inosine + H2O = hypoxanthine + D-ribose. It carries out the reaction uridine + H2O = D-ribose + uracil. The protein operates within purine metabolism; purine nucleoside salvage. Is potently inhibited by immucillin A and immucillin ACAP, which are transition state inhibitors. Its function is as follows. Catalyzes the hydrolysis of the N-glycosidic bond of all of the commonly occurring purine and pyrimidine nucleosides into ribose and the associated base, but has a preference for inosine and uridine as substrates. Likely functions in purine salvage from the host, a fundamental pathway since protozoan parasites such as L.major are incapable of de novo purine biosynthesis. The chain is Inosine-uridine preferring nucleoside hydrolase (NSNH) from Leishmania major.